Here is a 98-residue protein sequence, read N- to C-terminus: Cystatin-B (98 aa).

Residue Met-1 is modified to N-acetylmethionine. Positions 46-50 (QLVAG) match the Secondary area of contact motif.

It belongs to the cystatin family. In terms of assembly, able to form dimers stabilized by noncovalent forces.

It localises to the cytoplasm. Functionally, this is an intracellular thiol proteinase inhibitor. This is Cystatin-B (CSTB) from Bos taurus (Bovine).